A 474-amino-acid polypeptide reads, in one-letter code: Sialyltransferase-like protein 1 (474 aa).

Residues 1–14 (MRSHQAGRKLPLLQ) lie on the Cytoplasmic side of the membrane. The chain crosses the membrane as a helical; Signal-anchor for type II membrane protein span at residues 15–35 (LLGCVAVFSVFVFTIQSSFFA). Residues 36–474 (DNNRKLDLQP…CVRHPLKLDT (439 aa)) are Lumenal-facing. 4 N-linked (GlcNAc...) asparagine glycosylation sites follow: Asn-88, Asn-120, Asn-155, and Asn-243. The tract at residues 376–421 (RLQRSQQPTSSKRDGSGQFGNCKVWGDADPTKGPVSGSPDMSETRK) is disordered.

The protein belongs to the glycosyltransferase 29 family. Highly expressed in inflorescences and siliques and at lower levels in roots, leaves and stems.

It is found in the golgi apparatus membrane. In terms of biological role, required for normal pollen grain germination and pollen tube growth. May not be required for pollen development and female gametophytic function. The polypeptide is Sialyltransferase-like protein 1 (Arabidopsis thaliana (Mouse-ear cress)).